The following is a 221-amino-acid chain: ATP-dependent dethiobiotin synthetase BioD (221 aa).

12 to 17 (EVGKTV) is a binding site for ATP. Position 16 (Thr16) interacts with Mg(2+). Lys39 is a catalytic residue. Thr43 lines the substrate pocket. Residues Asp47, 105-108 (EGLG), and 165-166 (SC) contribute to the ATP site. Residues Asp47 and Glu105 each coordinate Mg(2+).

The protein belongs to the dethiobiotin synthetase family. Homodimer. Requires Mg(2+) as cofactor.

The protein localises to the cytoplasm. It carries out the reaction (7R,8S)-7,8-diammoniononanoate + CO2 + ATP = (4R,5S)-dethiobiotin + ADP + phosphate + 3 H(+). It catalyses the reaction (7R,8S)-8-amino-7-(carboxyamino)nonanoate + ATP = (4R,5S)-dethiobiotin + ADP + phosphate + H(+). It participates in cofactor biosynthesis; biotin biosynthesis; biotin from 7,8-diaminononanoate: step 1/2. In terms of biological role, catalyzes a mechanistically unusual reaction, the ATP-dependent insertion of CO2 between the N7 and N8 nitrogen atoms of 7,8-diaminopelargonic acid (DAPA, also called 7,8-diammoniononanoate) to form a ureido ring. This cyanobacterium does not encode bioA (which catalyzes the formation of the precursor for this reaction in the cannonical pathway), instead it encodes bioU, which replaces bioA and also performs the first half of the cannonical BioD reaction. Thus in this organism BioD has a different substrate. The chain is ATP-dependent dethiobiotin synthetase BioD from Crocosphaera subtropica (strain ATCC 51142 / BH68) (Cyanothece sp. (strain ATCC 51142)).